We begin with the raw amino-acid sequence, 156 residues long: ATP synthase subunit b (156 aa).

A helical membrane pass occupies residues 7-29; sequence LLGQAISFALFVWFCIKFVWPPL.

The protein belongs to the ATPase B chain family. As to quaternary structure, F-type ATPases have 2 components, F(1) - the catalytic core - and F(0) - the membrane proton channel. F(1) has five subunits: alpha(3), beta(3), gamma(1), delta(1), epsilon(1). F(0) has three main subunits: a(1), b(2) and c(10-14). The alpha and beta chains form an alternating ring which encloses part of the gamma chain. F(1) is attached to F(0) by a central stalk formed by the gamma and epsilon chains, while a peripheral stalk is formed by the delta and b chains.

The protein resides in the cell inner membrane. F(1)F(0) ATP synthase produces ATP from ADP in the presence of a proton or sodium gradient. F-type ATPases consist of two structural domains, F(1) containing the extramembraneous catalytic core and F(0) containing the membrane proton channel, linked together by a central stalk and a peripheral stalk. During catalysis, ATP synthesis in the catalytic domain of F(1) is coupled via a rotary mechanism of the central stalk subunits to proton translocation. Its function is as follows. Component of the F(0) channel, it forms part of the peripheral stalk, linking F(1) to F(0). The chain is ATP synthase subunit b from Shewanella sp. (strain W3-18-1).